Here is a 115-residue protein sequence, read N- to C-terminus: MKSYLKTLIFFPLILQIVVTALLIWFDDDSSGVIVPFSSYALTAFLLAAIPAFLTALLAAKFRYTRYNIASIVLVSSIISFVYCNMASYFYLLLLGEQDTSFWGWLTEGGLSLGL.

The next 3 helical transmembrane spans lie at 7–27, 40–60, and 72–92; these read TLIF…IWFD, YALT…LLAA, and IVLV…YFYL.

It localises to the cell membrane. This is an uncharacterized protein from Haemophilus influenzae (strain ATCC 51907 / DSM 11121 / KW20 / Rd).